Reading from the N-terminus, the 266-residue chain is Hydroxypyruvate/pyruvate aldolase (266 aa).

Catalysis depends on His-48, which acts as the Proton acceptor. A divalent metal cation is bound by residues Glu-152 and Asp-178.

Belongs to the HpcH/HpaI aldolase family. A divalent metal cation is required as a cofactor.

The enzyme catalyses D-glyceraldehyde + pyruvate = 2-dehydro-3-deoxy-L-galactonate. The catalysed reaction is 2-dehydro-3-deoxy-D-gluconate = D-glyceraldehyde + pyruvate. In terms of biological role, aldolase which can catalyze in vitro the aldolisation reaction between hydroxypyruvate (HPA) or pyruvate (PA) and D-glyceraldehyde (D-GA). The condensation of pyruvate and D-glyceraldehyde produces 2-dehydro-3-deoxy-L-galactonate as the major product and 2-dehydro-3-deoxy-D-gluconate. Has weak activity with hydroxypyruvate and D-glyceraldehyde. The sequence is that of Hydroxypyruvate/pyruvate aldolase from Agrobacterium fabrum (strain C58 / ATCC 33970) (Agrobacterium tumefaciens (strain C58)).